Here is a 330-residue protein sequence, read N- to C-terminus: Spondin-2 (330 aa).

The signal sequence occupies residues 1–25; sequence MENVSFSLDRTLWVFLLAMLGSTAG. The Spondin domain occupies 30-220; that stretch reads GESVCTARPL…EITASSPSHP (191 aa). Cysteines 34 and 170 form a disulfide. Glu140 serves as a coordination point for a divalent metal cation. Residues Asp159, Asp187, and Asp191 each coordinate Ca(2+). In terms of domain architecture, TSP type-1 spans 276 to 330; the sequence is DCEVSLWSSWGLCGGPCGKLGAKSRTRYVRVQPANNGTPCPELEEEAECAPDNCV. C-linked (Man) tryptophan glycosylation is present at Trp282.

As to quaternary structure, monomer. Interacts with integrin. In terms of tissue distribution, abundantly expressed in the developing hippocampus.

Its subcellular location is the secreted. It localises to the extracellular space. The protein resides in the extracellular matrix. Functionally, cell adhesion protein that promotes adhesion and outgrowth of hippocampal embryonic neurons. Binds directly to bacteria and their components and functions as an opsonin for macrophage phagocytosis of bacteria. Essential in the initiation of the innate immune response and represents a unique pattern-recognition molecule in the ECM for microbial pathogens. In Rattus norvegicus (Rat), this protein is Spondin-2 (Spon2).